A 993-amino-acid polypeptide reads, in one-letter code: Ephrin type-A receptor 7 (993 aa).

The first 27 residues, 1–27 (MVLRSRLPPWIMLCSVWLLRFAHTGEA), serve as a signal peptide directing secretion. Residues 28–550 (QAAKEVILLD…TAVSSEQNPV (523 aa)) are Extracellular-facing. In terms of domain architecture, Eph LBD spans 32 to 210 (EVILLDSKAQ…YYKKCWSIIE (179 aa)). Fibronectin type-III domains follow at residues 331-441 (PPSA…TGQA) and 442-537 (APSQ…TLEE). Asn-343 and Asn-410 each carry an N-linked (GlcNAc...) asparagine glycan. The chain crosses the membrane as a helical span at residues 551-571 (IIIAVVAVAGTIILVFMVFGF). Residues 572 to 993 (IIGRRHCGYS…LHLHGTGIQV (422 aa)) are Cytoplasmic-facing. A phosphotyrosine; by autocatalysis mark is found at Tyr-603 and Tyr-609. In terms of domain architecture, Protein kinase spans 628–889 (IKIERVIGAG…QIVGILDKMI (262 aa)). ATP contacts are provided by residues 634 to 642 (IGAGEFGEV) and Lys-660. Residue Asp-753 is the Proton acceptor of the active site. Tyr-786 and Tyr-935 each carry phosphotyrosine; by autocatalysis. The region spanning 918–982 (TTFCSVGEWL…MSSIQTMRAQ (65 aa)) is the SAM domain. The PDZ-binding signature appears at 991–993 (IQV).

It belongs to the protein kinase superfamily. Tyr protein kinase family. Ephrin receptor subfamily. In terms of assembly, heterotetramer upon binding of the ligand. The heterotetramer is composed of an ephrin dimer and a receptor dimer. Oligomerization is probably required to induce biological responses. In terms of processing, phosphorylated.

Its subcellular location is the cell membrane. The enzyme catalyses L-tyrosyl-[protein] + ATP = O-phospho-L-tyrosyl-[protein] + ADP + H(+). Its function is as follows. Receptor tyrosine kinase which binds promiscuously GPI-anchored ephrin-A family ligands residing on adjacent cells, leading to contact-dependent bidirectional signaling into neighboring cells. The signaling pathway downstream of the receptor is referred to as forward signaling while the signaling pathway downstream of the ephrin ligand is referred to as reverse signaling. Among GPI-anchored ephrin-A ligands, EFNA5 is a cognate/functional ligand for EPHA7 and their interaction regulates brain development modulating cell-cell adhesion and repulsion. Has a repellent activity on axons and is for instance involved in the guidance of corticothalamic axons and in the proper topographic mapping of retinal axons to the colliculus. May also regulate brain development through a caspase(CASP3)-dependent proapoptotic activity. Forward signaling may result in activation of components of the ERK signaling pathway including MAP2K1, MAP2K2, MAPK1 and MAPK3 which are phosphorylated upon activation of EPHA7. The chain is Ephrin type-A receptor 7 (EPHA7) from Gallus gallus (Chicken).